The following is a 547-amino-acid chain: Type I inositol polyphosphate 5-phosphatase 4 (547 aa).

Basic and acidic residues predominate over residues 56-67 (CSVRKSKTETRS). The interval 56 to 80 (CSVRKSKTETRSKRNSGRARRNKLD) is disordered. Catalytic regions lie at residues 387–402 (DRVI…IALS) and 467–482 (KRRT…WHGS).

Belongs to the inositol polyphosphate 5-phosphatase family.

This chain is Type I inositol polyphosphate 5-phosphatase 4, found in Arabidopsis thaliana (Mouse-ear cress).